The sequence spans 862 residues: Eukaryotic translation initiation factor 3 subunit C (862 aa).

The disordered stretch occupies residues 1–81 (MSSRFFYGGG…EEEEKVTVVK (81 aa)). The span at 17–54 (SSDEEELYSDREEEEKSEEEESSEEEDETSEEEESDEE) shows a compositional bias: acidic residues. Residues 55-65 (TGARKFLKDVA) are compositionally biased toward basic and acidic residues. Residues 66-75 (SDSEEEEEEE) are compositionally biased toward acidic residues. One can recognise a PCI domain in the interval 600 to 774 (FHMHINLELL…NAIVFRKGVE (175 aa)). A disordered region spans residues 813-862 (RDQGAGARGGRGSGRGGQARGGPRFPGGQQGRRPGGQQFGGGALGGAIKA). The span at 818–862 (GARGGRGSGRGGQARGGPRFPGGQQGRRPGGQQFGGGALGGAIKA) shows a compositional bias: gly residues.

This sequence belongs to the eIF-3 subunit C family. As to quaternary structure, component of the eukaryotic translation initiation factor 3 (eIF-3) complex.

The protein resides in the cytoplasm. Functionally, component of the eukaryotic translation initiation factor 3 (eIF-3) complex, which is involved in protein synthesis of a specialized repertoire of mRNAs and, together with other initiation factors, stimulates binding of mRNA and methionyl-tRNAi to the 40S ribosome. The eIF-3 complex specifically targets and initiates translation of a subset of mRNAs involved in cell proliferation. This is Eukaryotic translation initiation factor 3 subunit C (nip1) from Aspergillus fumigatus (strain CBS 144.89 / FGSC A1163 / CEA10) (Neosartorya fumigata).